The sequence spans 3071 residues: Intermembrane lipid transfer protein vps1301 (3071 aa).

In terms of domain architecture, Chorein N-terminal spans 2–115 (LEGLVAGLLN…QQALKQEQLD (114 aa)). An SHR-BD domain is found at 2143-2415 (HIEIFSPYII…KYSWDYPCCA (273 aa)).

It belongs to the VPS13 family.

Its subcellular location is the golgi apparatus. The protein localises to the trans-Golgi network. In terms of biological role, mediates the transfer of lipids between membranes at organelle contact sites. May play a role in mitochondrial lipid homeostasis, Golgi vesicle transport, reticulophagy, actin cytoskeleton organization and formation of the forespore membrane. The sequence is that of Intermembrane lipid transfer protein vps1301 from Schizosaccharomyces pombe (strain 972 / ATCC 24843) (Fission yeast).